The following is a 445-amino-acid chain: Bifunctional protein GlmU (445 aa).

Residues 1-218 form a pyrophosphorylase region; that stretch reads MRALVLAAGK…LLEITGVNTR (218 aa). UDP-N-acetyl-alpha-D-glucosamine-binding positions include 6–9, K20, Q69, 74–75, 96–98, G134, E147, N162, and N216; these read LAAG, GT, and YGD. D98 provides a ligand contact to Mg(2+). Residue N216 participates in Mg(2+) binding. Positions 219–239 are linker; sequence KTLVWLEEQLRMRKIEELLEN. The tract at residues 240 to 445 is N-acetyltransferase; that stretch reads GVTILDPATT…GWVLKKRKEE (206 aa). Residues R321 and K339 each coordinate UDP-N-acetyl-alpha-D-glucosamine. The active-site Proton acceptor is the H351. Y354 and N365 together coordinate UDP-N-acetyl-alpha-D-glucosamine. Residues A368, 374–375, S393, A411, and R428 each bind acetyl-CoA; that span reads NY.

It in the N-terminal section; belongs to the N-acetylglucosamine-1-phosphate uridyltransferase family. In the C-terminal section; belongs to the transferase hexapeptide repeat family. Homotrimer. Mg(2+) is required as a cofactor.

It is found in the cytoplasm. The catalysed reaction is alpha-D-glucosamine 1-phosphate + acetyl-CoA = N-acetyl-alpha-D-glucosamine 1-phosphate + CoA + H(+). It carries out the reaction N-acetyl-alpha-D-glucosamine 1-phosphate + UTP + H(+) = UDP-N-acetyl-alpha-D-glucosamine + diphosphate. The protein operates within nucleotide-sugar biosynthesis; UDP-N-acetyl-alpha-D-glucosamine biosynthesis; N-acetyl-alpha-D-glucosamine 1-phosphate from alpha-D-glucosamine 6-phosphate (route II): step 2/2. It participates in nucleotide-sugar biosynthesis; UDP-N-acetyl-alpha-D-glucosamine biosynthesis; UDP-N-acetyl-alpha-D-glucosamine from N-acetyl-alpha-D-glucosamine 1-phosphate: step 1/1. It functions in the pathway bacterial outer membrane biogenesis; LPS lipid A biosynthesis. In terms of biological role, catalyzes the last two sequential reactions in the de novo biosynthetic pathway for UDP-N-acetylglucosamine (UDP-GlcNAc). The C-terminal domain catalyzes the transfer of acetyl group from acetyl coenzyme A to glucosamine-1-phosphate (GlcN-1-P) to produce N-acetylglucosamine-1-phosphate (GlcNAc-1-P), which is converted into UDP-GlcNAc by the transfer of uridine 5-monophosphate (from uridine 5-triphosphate), a reaction catalyzed by the N-terminal domain. The polypeptide is Bifunctional protein GlmU (Thermotoga sp. (strain RQ2)).